The sequence spans 547 residues: Chaperonin GroEL 2 (547 aa).

ATP contacts are provided by residues 30-33 (TLGP), Lys-51, 87-91 (DGTTT), Gly-415, and Asp-496.

Belongs to the chaperonin (HSP60) family. In terms of assembly, forms a cylinder of 14 subunits composed of two heptameric rings stacked back-to-back. Interacts with the co-chaperonin GroES.

It localises to the cytoplasm. It carries out the reaction ATP + H2O + a folded polypeptide = ADP + phosphate + an unfolded polypeptide.. Functionally, together with its co-chaperonin GroES, plays an essential role in assisting protein folding. The GroEL-GroES system forms a nano-cage that allows encapsulation of the non-native substrate proteins and provides a physical environment optimized to promote and accelerate protein folding. In Rhodopseudomonas palustris (strain ATCC BAA-98 / CGA009), this protein is Chaperonin GroEL 2.